The primary structure comprises 146 residues: Large ribosomal subunit protein uL11 (146 aa).

It belongs to the universal ribosomal protein uL11 family. Part of the ribosomal stalk of the 50S ribosomal subunit. Interacts with L10 and the large rRNA to form the base of the stalk. L10 forms an elongated spine to which L12 dimers bind in a sequential fashion forming a multimeric L10(L12)X complex. In terms of processing, one or more lysine residues are methylated.

Its function is as follows. Forms part of the ribosomal stalk which helps the ribosome interact with GTP-bound translation factors. This chain is Large ribosomal subunit protein uL11, found in Corynebacterium jeikeium (strain K411).